Consider the following 2177-residue polypeptide: Mediator of RNA polymerase II transcription subunit 12 (2177 aa).

The tract at residues Arg12–Glu35 is disordered. N6-acetyllysine is present on Lys80. A Phosphotyrosine modification is found at Tyr166. Disordered stretches follow at residues Gln323–Thr344, Gly627–Asp669, Thr690–Lys717, and Thr1241–Arg1266. Phosphoserine is present on residues Ser635, Ser665, Ser698, and Ser700. The segment covering Glu702–Lys717 has biased composition (basic and acidic residues). 2 positions are modified to phosphoserine: Ser1258 and Ser1269. Residues Ala1394–Ser1411 are compositionally biased toward low complexity. Disordered regions lie at residues Ala1394 to Pro1415, Glu1450 to Ser1474, and Tyr1738 to Ile1829. Composition is skewed to basic and acidic residues over residues Glu1450–Lys1469 and Glu1758–Lys1771. The interval Leu1616–Gln2051 is interaction with CTNNB1 and GLI3. Basic residues predominate over residues Lys1784–Ser1793. N6-acetyllysine is present on Lys1798. Residue Arg1899 is modified to Asymmetric dimethylarginine; alternate. Omega-N-methylarginine; alternate is present on Arg1899. Position 1910 is an omega-N-methylarginine (Arg1910). Disordered stretches follow at residues Gln1919–Leu1938 and Ser1967–Arg1989. A compositionally biased stretch (polar residues) spans Val1927–Leu1938. A compositionally biased stretch (low complexity) spans Ser1967–Thr1980. Residues Arg1994 and Arg2015 each carry the asymmetric dimethylarginine modification. Composition is skewed to low complexity over residues Gln2115–Ala2125, Ser2133–Gln2149, and Leu2158–Thr2171. Disordered stretches follow at residues Gln2115–Gln2149 and Leu2158–Tyr2177.

This sequence belongs to the Mediator complex subunit 12 family. Component of the Mediator complex, which is composed of MED1, MED4, MED6, MED7, MED8, MED9, MED10, MED11, MED12, MED13, MED13L, MED14, MED15, MED16, MED17, MED18, MED19, MED20, MED21, MED22, MED23, MED24, MED25, MED26, MED27, MED29, MED30, MED31, CCNC, CDK8 and CDC2L6/CDK11. The MED12, MED13, CCNC and CDK8 subunits form a distinct module termed the CDK8 module. Mediator containing the CDK8 module is less active than Mediator lacking this module in supporting transcriptional activation. Individual preparations of the Mediator complex lacking one or more distinct subunits have been variously termed ARC, CRSP, DRIP, PC2, SMCC and TRAP. Also interacts with CTNNB1 and GLI3. Ubiquitous.

The protein resides in the nucleus. Its function is as follows. Component of the Mediator complex, a coactivator involved in the regulated transcription of nearly all RNA polymerase II-dependent genes. Mediator functions as a bridge to convey information from gene-specific regulatory proteins to the basal RNA polymerase II transcription machinery. Mediator is recruited to promoters by direct interactions with regulatory proteins and serves as a scaffold for the assembly of a functional pre-initiation complex with RNA polymerase II and the general transcription factors. This subunit may specifically regulate transcription of targets of the Wnt signaling pathway and SHH signaling pathway. The chain is Mediator of RNA polymerase II transcription subunit 12 (MED12) from Homo sapiens (Human).